Consider the following 339-residue polypeptide: MVSLLRLCSFLLAAGSILVQGSPIIAPSIPPCEPPSNFTGPSNFTSRPGNGASPFWLIAHRVLTKDGVKAALGHGANALEMDITGWWSGWFGDHDGLLTSAGDTVSDLFDEIASRRTQGDPVSFVWLDLKNPDFNKNGVNIVSLMILCREKLEKVGVRVLYGFYSSQTNGPSFKFVKQVMNENEAIGIDGKFETVEKDFEEKGIPLQKRVFSSGLFNPDFNFGNCEVHSSGVCAQLREGKESHEFSKVFGWTVSSYTRKDHVYKMMEVGVDGLIYGFVASHYYDHADIRHTLSTIRGWLEEHKDTHRLATVDDNPWSSMSKKGSSKSSWVKGEVPSIAH.

The signal sequence occupies residues 1-21 (MVSLLRLCSFLLAAGSILVQG). Residue His60 is part of the active site. Positions 80, 82, and 128 each coordinate Mg(2+). The SMD-tail motif lies at 309–316 (ATVDDNPW). The segment at 313 to 339 (DNPWSSMSKKGSSKSSWVKGEVPSIAH) is disordered. A compositionally biased stretch (low complexity) spans 317 to 328 (SSMSKKGSSKSS).

The protein belongs to the sphingomyelinase D/phospholipase D family. Mg(2+) is required as a cofactor.

It localises to the secreted. It catalyses the reaction a sphingomyelin + H2O = an N-acylsphing-4-enine 1-phosphate + choline + H(+). Its function is as follows. Catalyzes the hydrolysis of sphingomyelin. Sphingomyelinases D are produced by some spider in their venoms, but also by arthropods such as ticks, or pathogenic bacteria and fungi. They might play a role in pathogenicity through different mechanisms, such as membrane destabilization and host cell penetration, but also pulmonary inflammation and cutaneous lesions. This is Sphingomyelinase D from Arthroderma benhamiae (strain ATCC MYA-4681 / CBS 112371) (Trichophyton mentagrophytes).